Reading from the N-terminus, the 224-residue chain is Small ribosomal subunit protein uS3 (224 aa).

One can recognise a KH type-2 domain in the interval 20-89 (LDEFLANYFK…NVNITVSPVP (70 aa)).

The protein belongs to the universal ribosomal protein uS3 family. Part of the 30S ribosomal subunit.

Functionally, binds the lower part of the 30S subunit head. The polypeptide is Small ribosomal subunit protein uS3 (Staphylothermus marinus (strain ATCC 43588 / DSM 3639 / JCM 9404 / F1)).